A 93-amino-acid chain; its full sequence is MPRSLKKGPFVDDHLLAKVDVQNEKGTKQVIKTWSRRSTIIPDFIGHTFAVHDGRKHVPVFVSDSMVGHKLGEFAPTRTFKGHIKDDRKAKRR.

This sequence belongs to the universal ribosomal protein uS19 family.

Functionally, protein S19 forms a complex with S13 that binds strongly to the 16S ribosomal RNA. The chain is Small ribosomal subunit protein uS19 from Rhodococcus erythropolis (strain PR4 / NBRC 100887).